Consider the following 110-residue polypeptide: U1-lycotoxin-Ls1kk (110 aa).

A signal peptide spans 1-20 (MKFVLLFGVFLVTLFSYSSA). Positions 21-44 (EMLDDFDQADEDELLSLIEKEEAR) are excised as a propeptide. 4 cysteine pairs are disulfide-bonded: Cys47/Cys62, Cys54/Cys71, Cys61/Cys89, and Cys73/Cys87.

The protein belongs to the neurotoxin 19 (CSTX) family. 03 subfamily. As to expression, expressed by the venom gland.

The protein resides in the secreted. The polypeptide is U1-lycotoxin-Ls1kk (Lycosa singoriensis (Wolf spider)).